We begin with the raw amino-acid sequence, 85 residues long: Cytochrome b (85 aa).

3 helical membrane passes run 1–8, 32–53, and 68–85; these read LTGLFLAM, WLIR…YLHI, and WNVG…AFVG. Positions 38 and 52 each coordinate heme b.

It belongs to the cytochrome b family. As to quaternary structure, the cytochrome bc1 complex contains 3 respiratory subunits (MT-CYB, CYC1 and UQCRFS1), 2 core proteins (UQCRC1 and UQCRC2) and probably 6 low-molecular weight proteins. It depends on heme b as a cofactor.

The protein localises to the mitochondrion inner membrane. Functionally, component of the ubiquinol-cytochrome c reductase complex (complex III or cytochrome b-c1 complex) that is part of the mitochondrial respiratory chain. The b-c1 complex mediates electron transfer from ubiquinol to cytochrome c. Contributes to the generation of a proton gradient across the mitochondrial membrane that is then used for ATP synthesis. This Pomoxis nigromaculatus (Black crappie) protein is Cytochrome b (mt-cyb).